A 345-amino-acid polypeptide reads, in one-letter code: tRNA N6-adenosine threonylcarbamoyltransferase (345 aa).

Fe cation contacts are provided by His109 and His113. Substrate-binding positions include 136 to 140 (TVSGG), Asp169, Gly182, Asp186, and Asn284. Asp312 lines the Fe cation pocket.

This sequence belongs to the KAE1 / TsaD family. Fe(2+) is required as a cofactor.

It localises to the cytoplasm. It catalyses the reaction L-threonylcarbamoyladenylate + adenosine(37) in tRNA = N(6)-L-threonylcarbamoyladenosine(37) in tRNA + AMP + H(+). Functionally, required for the formation of a threonylcarbamoyl group on adenosine at position 37 (t(6)A37) in tRNAs that read codons beginning with adenine. Is involved in the transfer of the threonylcarbamoyl moiety of threonylcarbamoyl-AMP (TC-AMP) to the N6 group of A37, together with TsaE and TsaB. TsaD likely plays a direct catalytic role in this reaction. In Chlorobium phaeovibrioides (strain DSM 265 / 1930) (Prosthecochloris vibrioformis (strain DSM 265)), this protein is tRNA N6-adenosine threonylcarbamoyltransferase.